A 764-amino-acid chain; its full sequence is PFL-like enzyme TdcE (764 aa).

A PFL domain is found at 7–629 (TSDKLYADAW…KTGNTPDGRR (623 aa)). The S-acetylcysteine intermediate role is filled by Cys423. The Cysteine radical intermediate role is filled by Cys424. A disordered region spans residues 622-645 (GNTPDGRRAGTPFAPGANPMHGRD). One can recognise a Glycine radical domain in the interval 636 to 764 (PGANPMHGRD…VISRTFTQAL (129 aa)). Gly739 is subject to Glycine radical.

It belongs to the glycyl radical enzyme (GRE) family. PFL subfamily.

Its subcellular location is the cytoplasm. The catalysed reaction is 2-oxobutanoate + CoA = propanoyl-CoA + formate. It carries out the reaction formate + acetyl-CoA = pyruvate + CoA. Its pathway is amino-acid degradation; L-threonine degradation via propanoate pathway; propanoate from L-threonine: step 2/4. Its activity is regulated as follows. Dependent on PFL-activase. In terms of biological role, catalyzes the cleavage of 2-ketobutyrate to propionyl-CoA and formate. It can also use pyruvate as substrate. This chain is PFL-like enzyme TdcE (tdcE), found in Escherichia coli (strain K12).